The sequence spans 442 residues: GTPase Der (442 aa).

2 EngA-type G domains span residues 2–167 (RTIA…PIQN) and 175–351 (FKFC…EQAM). GTP-binding positions include 8–15 (GKPNVGKS), 55–59 (DTGGI), 119–122 (NKVE), 181–188 (GRPNVGKS), 228–232 (DTAGV), and 293–296 (NKWD). Residues 352–436 (RKVATSLLND…PITLYWQDKN (85 aa)) enclose the KH-like domain.

Belongs to the TRAFAC class TrmE-Era-EngA-EngB-Septin-like GTPase superfamily. EngA (Der) GTPase family. Associates with the 50S ribosomal subunit.

GTPase that plays an essential role in the late steps of ribosome biogenesis. The chain is GTPase Der from Ureaplasma urealyticum serovar 10 (strain ATCC 33699 / Western).